Here is a 191-residue protein sequence, read N- to C-terminus: Large ribosomal subunit protein bL12cz (191 aa).

A chloroplast-targeting transit peptide spans 1 to 58 (MASTTLSIATTIRSSSYPTLASINHFPSRTTTIEFPSRFGGGSSSTLTHRATHLRPIA).

This sequence belongs to the bacterial ribosomal protein bL12 family.

Its subcellular location is the plastid. It is found in the chloroplast. The protein is Large ribosomal subunit protein bL12cz (RPL12A) of Arabidopsis thaliana (Mouse-ear cress).